The following is a 390-amino-acid chain: COP9/Signalosome and eIF3 complex-shared subunit 1 (390 aa).

Positions 188–351 (QAAKVMTALL…RTLIVSSYQH (164 aa)) constitute a PCI domain.

This sequence belongs to the eIF-3 subunit M family. In terms of assembly, component of the eukaryotic translation initiation factor 3 (eIF-3) complex. Within the eIF-3 complex, interacts directly with eif-3.F. Component of the CSN complex, composed of csn-1, csn-2, csn-3, csn-4, csn-5, csn-6 and csn-7. Within the CSN complex, interacts directly with csn-1 and csn-4.

It is found in the cytoplasm. Component of the eukaryotic translation initiation factor 3 (eIF-3) complex, which is involved in protein synthesis of a specialized repertoire of mRNAs and, together with other initiation factors, stimulates binding of mRNA and methionyl-tRNAi to the 40S ribosome. The eIF-3 complex specifically targets and initiates translation of a subset of mRNAs involved in cell proliferation (Potential). Component of the COP9 signalosome complex (CSN), a complex involved in various cellular and developmental processes. The CSN complex is an essential regulator of the ubiquitin (Ubl) conjugation pathway by mediating the deneddylation of the cullin subunits of the SCF-type E3 ligase complexes, leading to decrease the Ubl ligase activity of SCF. The CSN complex plays an essential role in embryogenesis and oogenesis and is required to regulate microtubule stability in the early embryo. Mediates mei-1 targeting for degradation at the meiosis to mitosis transition via deneddylation of cul-3. This is COP9/Signalosome and eIF3 complex-shared subunit 1 from Caenorhabditis elegans.